Reading from the N-terminus, the 361-residue chain is Beta-hexosaminidase (361 aa).

Residues Asp-69, Arg-77, Arg-144, and 174–175 each bind substrate; that span reads KH. Residue His-187 is the Proton donor/acceptor of the active site. Asp-258 (nucleophile) is an active-site residue.

It belongs to the glycosyl hydrolase 3 family. NagZ subfamily.

The protein localises to the cytoplasm. The catalysed reaction is Hydrolysis of terminal non-reducing N-acetyl-D-hexosamine residues in N-acetyl-beta-D-hexosaminides.. It functions in the pathway cell wall biogenesis; peptidoglycan recycling. In terms of biological role, plays a role in peptidoglycan recycling by cleaving the terminal beta-1,4-linked N-acetylglucosamine (GlcNAc) from peptide-linked peptidoglycan fragments, giving rise to free GlcNAc, anhydro-N-acetylmuramic acid and anhydro-N-acetylmuramic acid-linked peptides. The sequence is that of Beta-hexosaminidase from Neisseria meningitidis serogroup C / serotype 2a (strain ATCC 700532 / DSM 15464 / FAM18).